A 376-amino-acid chain; its full sequence is Deoxyuridine 5'-triphosphate nucleotidohydrolase (376 aa).

This sequence belongs to the dUTPase family. Requires Mg(2+) as cofactor.

The enzyme catalyses dUTP + H2O = dUMP + diphosphate + H(+). Involved in nucleotide metabolism: produces dUMP, the immediate precursor of thymidine nucleotides and decreases the intracellular concentration of dUTP to avoid uracil incorporation into viral DNA. This chain is Deoxyuridine 5'-triphosphate nucleotidohydrolase, found in Human herpesvirus 6A (strain GS) (HHV-6 variant A).